The sequence spans 134 residues: Cytochrome b (134 aa).

A run of 3 helical transmembrane segments spans residues 33-53, 77-98, and 113-133; these read FGSL…FLAM, WLLR…YLHV, and WNVG…GYVL. 2 residues coordinate heme b: H83 and H97.

This sequence belongs to the cytochrome b family. As to quaternary structure, the cytochrome bc1 complex contains 11 subunits: 3 respiratory subunits (MT-CYB, CYC1 and UQCRFS1), 2 core proteins (UQCRC1 and UQCRC2) and 6 low-molecular weight proteins (UQCRH/QCR6, UQCRB/QCR7, UQCRQ/QCR8, UQCR10/QCR9, UQCR11/QCR10 and a cleavage product of UQCRFS1). This cytochrome bc1 complex then forms a dimer. Heme b serves as cofactor.

The protein localises to the mitochondrion inner membrane. Its function is as follows. Component of the ubiquinol-cytochrome c reductase complex (complex III or cytochrome b-c1 complex) that is part of the mitochondrial respiratory chain. The b-c1 complex mediates electron transfer from ubiquinol to cytochrome c. Contributes to the generation of a proton gradient across the mitochondrial membrane that is then used for ATP synthesis. The sequence is that of Cytochrome b (MT-CYB) from Chiroderma trinitatum (Little big-eyed bat).